The chain runs to 191 residues: Ankyrin repeat domain-containing protein 22 (191 aa).

4 ANK repeats span residues 39 to 68 (NGDT…NVNL), 72 to 100 (KERT…MPVL), 101 to 130 (LIGY…EVNA), and 134 to 163 (YGCT…DPTI).

This chain is Ankyrin repeat domain-containing protein 22 (ANKRD22), found in Homo sapiens (Human).